We begin with the raw amino-acid sequence, 889 residues long: Cytoplasmic aconitate hydratase (889 aa).

Substrate-binding positions include glutamine 86 and 205–207 (DSH). The [4Fe-4S] cluster site is built by cysteine 437, cysteine 503, and cysteine 506. Positions 536 and 541 each coordinate substrate. Phosphothreonine is present on threonine 628. Substrate is bound by residues arginine 699 and 779-780 (SR).

It belongs to the aconitase/IPM isomerase family. In terms of assembly, interacts (when associated with the 4Fe-4S) with FBXL5. Interacts with frataxin(81-210). [4Fe-4S] cluster is required as a cofactor.

The protein resides in the cytoplasm. The protein localises to the cytosol. It carries out the reaction citrate = D-threo-isocitrate. In terms of biological role, bifunctional iron sensor that switches between 2 activities depending on iron availability. Iron deprivation, promotes its mRNA binding activity through which it regulates the expression of genes involved in iron uptake, sequestration and utilization. Binds to iron-responsive elements (IRES) in the untranslated region of target mRNAs preventing for instance the translation of ferritin and aminolevulinic acid synthase and stabilizing the transferrin receptor mRNA. Conversely, when cellular iron levels are high, binds a 4Fe-4S cluster which precludes RNA binding activity and promotes the aconitase activity, the isomerization of citrate to isocitrate via cis-aconitate. The chain is Cytoplasmic aconitate hydratase (ACO1) from Homo sapiens (Human).